The sequence spans 342 residues: S-adenosyl-L-methionine-dependent tRNA 4-demethylwyosine synthase (342 aa).

[4Fe-4S] cluster is bound by residues Cys-45, Cys-58, Cys-71, Cys-81, Cys-85, and Cys-88. In terms of domain architecture, Radical SAM core spans 64–312; that stretch reads YGIHSHRCLQ…VKHLPGYHIE (249 aa).

The protein belongs to the TYW1 family. As to quaternary structure, monomer. The cofactor is [4Fe-4S] cluster.

Its subcellular location is the cytoplasm. The catalysed reaction is N(1)-methylguanosine(37) in tRNA(Phe) + pyruvate + S-adenosyl-L-methionine = 4-demethylwyosine(37) in tRNA(Phe) + 5'-deoxyadenosine + L-methionine + CO2 + H2O. In terms of biological role, component of the wyosine derivatives biosynthesis pathway that catalyzes the condensation of N-methylguanine with 2 carbon atoms from pyruvate to form the tricyclic 4-demethylwyosine (imG-14) on guanosine-37 of tRNA(Phe). The protein is S-adenosyl-L-methionine-dependent tRNA 4-demethylwyosine synthase of Pyrococcus abyssi (strain GE5 / Orsay).